The following is a 137-amino-acid chain: MERTFAIIKPDAVERNITGKVLDKIEGAGFKIVGMKKIHLTKNEAEGFYYVHKERPFFNDLCTFMSRNPVVVLALEKENAIAAWRELMGATNPANAEAGTIRKDFGVSIEENTVHGSDSPESAAFEIPYFFSQLELV.

ATP-binding residues include lysine 9, phenylalanine 57, arginine 85, threonine 91, arginine 102, and asparagine 112. Histidine 115 acts as the Pros-phosphohistidine intermediate in catalysis.

The protein belongs to the NDK family. Homotetramer. Requires Mg(2+) as cofactor.

Its subcellular location is the cytoplasm. The enzyme catalyses a 2'-deoxyribonucleoside 5'-diphosphate + ATP = a 2'-deoxyribonucleoside 5'-triphosphate + ADP. It carries out the reaction a ribonucleoside 5'-diphosphate + ATP = a ribonucleoside 5'-triphosphate + ADP. In terms of biological role, major role in the synthesis of nucleoside triphosphates other than ATP. The ATP gamma phosphate is transferred to the NDP beta phosphate via a ping-pong mechanism, using a phosphorylated active-site intermediate. The sequence is that of Nucleoside diphosphate kinase from Geotalea uraniireducens (strain Rf4) (Geobacter uraniireducens).